We begin with the raw amino-acid sequence, 1384 residues long: Sterol 3-beta-glucosyltransferase (1384 aa).

Disordered stretches follow at residues 1-64 (MPNM…DGQL), 86-189 (ARFD…TPRA), and 204-229 (DKKQSADQPSSSTKGETDGTSEQSCA). Over residues 7–19 (LLEDAKRRVDRRL) the composition is skewed to basic and acidic residues. Low complexity predominate over residues 21-36 (ASRQSISSSRIFSSAF). The span at 38–47 (DRLKDDHDAQ) shows a compositional bias: basic and acidic residues. The span at 146-156 (LRSLKPSPKSS) shows a compositional bias: low complexity. Positions 158–172 (GTETTVQTEPPTSDE) are enriched in polar residues. The span at 174–189 (SPLASPRRARSATPRA) shows a compositional bias: low complexity. The segment covering 209–229 (ADQPSSSTKGETDGTSEQSCA) has biased composition (polar residues). Residues 237–284 (KEMFGFEMPEKVLMEYACSLLQNILLQGYMYVTEGHICFYAYLPRKSA) form the GRAM 1 domain. A PH domain is found at 285 to 384 (VTIRSGYLHK…WVKALQKVIF (100 aa)). Disordered stretches follow at residues 457–526 (MKTS…RQRD) and 560–629 (NRSD…VNSS). Composition is skewed to polar residues over residues 458 to 473 (KTSQLLPPPSEQTSPA), 483 to 494 (WSLNSDLSQSRG), and 560 to 572 (NRSDVFQSPTIHT). The segment covering 578–588 (PSGDRTGRRLS) has biased composition (basic and acidic residues). Residues 604 to 629 (RNGQEMQYASSDSDQGTQHPSKVNSS) are compositionally biased toward polar residues. The GRAM 2 domain maps to 714–817 (RFRAHFALPS…RDDCAVTVHQ (104 aa)). Ser901, Arg902, Asp904, Ala1204, His1206, His1219, Gly1223, Thr1224, Asp1243, and Gln1244 together coordinate UDP-alpha-D-glucose. Over residues 1322–1336 (VSSTPFSPTPSAKTT) the composition is skewed to polar residues. The tract at residues 1322-1350 (VSSTPFSPTPSAKTTAEQEEDDVDDSEEW) is disordered. Acidic residues predominate over residues 1338–1350 (EQEEDDVDDSEEW).

This sequence belongs to the glycosyltransferase 28 family.

It is found in the cytoplasm. The protein localises to the preautophagosomal structure membrane. The enzyme catalyses a sterol + UDP-alpha-D-glucose = a sterol 3-beta-D-glucoside + UDP + H(+). It catalyses the reaction ergosterol + UDP-alpha-D-glucose = ergosteryl 3-beta-D-glucoside + UDP + H(+). In terms of biological role, sterol glycosyltransferase responsible for the glycosylation of ergosterol to form ergosterol-glucoside. Involved in cytoplasm to vacuole transport (Cvt), pexophagy or nonselective autophagy. The polypeptide is Sterol 3-beta-glucosyltransferase (Aspergillus oryzae (strain ATCC 42149 / RIB 40) (Yellow koji mold)).